The following is a 151-amino-acid chain: MINSSSKKNLISTFSSMFTICIVMIFVTCYETFQQDGEPFPIRGPLTRITVKNNNDYLLGIHCKSKDDDLGFHIHKEGELYGWKFHVNFQNSTLYFCGFSQGQDNKGVFDIDRAERDFYRCRNCTWNAKKDSLYGYSNLPQTVTWFFKWLK.

N-linked (GlcNAc...) asparagine glycosylation is found at Asn-91 and Asn-123.

The protein belongs to the plant self-incompatibility (S1) protein family.

Its subcellular location is the secreted. The chain is S-protein homolog 27 from Arabidopsis thaliana (Mouse-ear cress).